We begin with the raw amino-acid sequence, 1492 residues long: DNA polymerase alpha catalytic subunit (1492 aa).

3 disordered regions span residues 34-112 (DFIV…VEQS), 162-195 (SVTLESREEQERRRQSEQLKQQANIGQNQSDVNP), and 210-234 (ANSYQSKQNSHSVSKSKPGDHEMAN). The segment covering 42–55 (YGYRDHGGEIWDRD) has biased composition (basic and acidic residues). Residues 93-105 (NAASTNPSAQQKP) show a composition bias toward polar residues. A compositionally biased stretch (basic and acidic residues) spans 166–178 (ESREEQERRRQSE). Composition is skewed to polar residues over residues 184-194 (ANIGQNQSDVN) and 210-224 (ANSYQSKQNSHSVSK). Cys1314, Cys1317, Cys1341, Cys1344, Cys1375, Cys1380, Cys1393, and Cys1398 together coordinate Zn(2+). The CysA-type zinc-finger motif lies at 1314–1344 (CPHCAHNYHFPGILVPSSNNTELTGLACVKC). Positions 1375 to 1398 (CKEPQCGMKTNQLLLNNKCIVKGC) match the CysB motif motif.

It belongs to the DNA polymerase type-B family.

It localises to the nucleus. The enzyme catalyses DNA(n) + a 2'-deoxyribonucleoside 5'-triphosphate = DNA(n+1) + diphosphate. Functionally, polymerase alpha in a complex with DNA primase is a replicative polymerase. The protein is DNA polymerase alpha catalytic subunit of Sterkiella nova (Ciliate).